The following is a 187-amino-acid chain: Large ribosomal subunit protein uL22 (187 aa).

It belongs to the universal ribosomal protein uL22 family.

The chain is Large ribosomal subunit protein uL22 (RPL17) from Theileria parva (East coast fever infection agent).